We begin with the raw amino-acid sequence, 893 residues long: DNA mismatch repair protein MutS (893 aa).

Residues 1-17 (MESTMSSASTNASPPSA) are compositionally biased toward low complexity. The disordered stretch occupies residues 1–22 (MESTMSSASTNASPPSASEKHT). 641–648 (GPNMGGKS) is a binding site for ATP.

The protein belongs to the DNA mismatch repair MutS family.

This protein is involved in the repair of mismatches in DNA. It is possible that it carries out the mismatch recognition step. This protein has a weak ATPase activity. This chain is DNA mismatch repair protein MutS, found in Herminiimonas arsenicoxydans.